The following is a 303-amino-acid chain: Glycine--tRNA ligase alpha subunit (303 aa).

Belongs to the class-II aminoacyl-tRNA synthetase family. Tetramer of two alpha and two beta subunits.

The protein localises to the cytoplasm. The enzyme catalyses tRNA(Gly) + glycine + ATP = glycyl-tRNA(Gly) + AMP + diphosphate. The sequence is that of Glycine--tRNA ligase alpha subunit (glyQ) from Helicobacter pylori (strain ATCC 700392 / 26695) (Campylobacter pylori).